The chain runs to 489 residues: UDP-N-acetylmuramate--L-alanine ligase (489 aa).

Residue 128-134 (GTHGKTT) coordinates ATP.

The protein belongs to the MurCDEF family.

It localises to the cytoplasm. It catalyses the reaction UDP-N-acetyl-alpha-D-muramate + L-alanine + ATP = UDP-N-acetyl-alpha-D-muramoyl-L-alanine + ADP + phosphate + H(+). It participates in cell wall biogenesis; peptidoglycan biosynthesis. Cell wall formation. In Shewanella sediminis (strain HAW-EB3), this protein is UDP-N-acetylmuramate--L-alanine ligase.